The sequence spans 196 residues: Small ribosomal subunit protein uS4c (196 aa).

Residues 15–41 (LGALPGLTSKRPRSGSDLKNPLRSGKR) form a disordered region. The S4 RNA-binding domain occupies 89 to 150 (MRLDNILFRL…KQRSKALIQN (62 aa)).

The protein belongs to the universal ribosomal protein uS4 family. Part of the 30S ribosomal subunit. Contacts protein S5. The interaction surface between S4 and S5 is involved in control of translational fidelity.

It is found in the plastid. It localises to the chloroplast. One of the primary rRNA binding proteins, it binds directly to 16S rRNA where it nucleates assembly of the body of the 30S subunit. Its function is as follows. With S5 and S12 plays an important role in translational accuracy. This chain is Small ribosomal subunit protein uS4c (rps4), found in Narcissus odorus (Campernelle jonquil).